The primary structure comprises 512 residues: ATP synthase subunit alpha (512 aa).

Residue 169 to 176 (GDRQTGKT) participates in ATP binding.

It belongs to the ATPase alpha/beta chains family. In terms of assembly, F-type ATPases have 2 components, CF(1) - the catalytic core - and CF(0) - the membrane proton channel. CF(1) has five subunits: alpha(3), beta(3), gamma(1), delta(1), epsilon(1). CF(0) has three main subunits: a(1), b(2) and c(9-12). The alpha and beta chains form an alternating ring which encloses part of the gamma chain. CF(1) is attached to CF(0) by a central stalk formed by the gamma and epsilon chains, while a peripheral stalk is formed by the delta and b chains.

The protein localises to the cell inner membrane. It catalyses the reaction ATP + H2O + 4 H(+)(in) = ADP + phosphate + 5 H(+)(out). Functionally, produces ATP from ADP in the presence of a proton gradient across the membrane. The alpha chain is a regulatory subunit. The sequence is that of ATP synthase subunit alpha from Dechloromonas aromatica (strain RCB).